The following is a 297-amino-acid chain: 33 kDa chaperonin (297 aa).

2 cysteine pairs are disulfide-bonded: Cys-233–Cys-235 and Cys-267–Cys-270.

It belongs to the HSP33 family. In terms of processing, under oxidizing conditions two disulfide bonds are formed involving the reactive cysteines. Under reducing conditions zinc is bound to the reactive cysteines and the protein is inactive.

It is found in the cytoplasm. Its function is as follows. Redox regulated molecular chaperone. Protects both thermally unfolding and oxidatively damaged proteins from irreversible aggregation. Plays an important role in the bacterial defense system toward oxidative stress. The protein is 33 kDa chaperonin of Haemophilus ducreyi (strain 35000HP / ATCC 700724).